Reading from the N-terminus, the 264-residue chain is Low molecular mass lipoprotein PBMHP-12 (264 aa).

Positions 1-16 are cleaved as a signal peptide; sequence MKLLVVFAMCVPAASA.

Belongs to the 30 kDa lipoprotein family.

The protein localises to the secreted. The polypeptide is Low molecular mass lipoprotein PBMHP-12 (Bombyx mori (Silk moth)).